The chain runs to 247 residues: Protein FAM133B (247 aa).

Disordered stretches follow at residues 19-38 and 70-247; these read SRGPIQSSGPTIQDYLNRPR and KKEL…PDSP. Residues 70 to 80 show a composition bias toward basic and acidic residues; that stretch reads KKELEKHREKL. Residue Ser82 is modified to Phosphoserine. Residues 89 to 102 show a composition bias toward basic residues; that stretch reads KKRQRKKKEKKKSG. Low complexity predominate over residues 103 to 119; that stretch reads RYSSSSSSSSDSSSSSS. Basic residues predominate over residues 128 to 140; sequence QGKRRKKKKNRSH. A compositionally biased stretch (basic and acidic residues) spans 165–176; it reads KDGTEKEKDIKG. Phosphoserine occurs at positions 191, 192, 194, and 196. The span at 211–221 shows a compositional bias: basic and acidic residues; the sequence is SSEEREKATEK. The segment covering 222 to 239 has biased composition (basic residues); sequence TKKKKKHKKHSKKKKKKA.

This sequence belongs to the FAM133 family.

The polypeptide is Protein FAM133B (FAM133B) (Homo sapiens (Human)).